Here is an 803-residue protein sequence, read N- to C-terminus: Mastermind-like domain-containing protein 1 (803 aa).

Disordered stretches follow at residues 22–50 (NRQE…TGMA), 292–374 (LAAS…APSS), 420–452 (GHLI…QQSF), and 486–641 (QQQQ…PDQS). Residues 296–309 (KQGSATKQGSNRNW) are compositionally biased toward polar residues. The segment covering 312 to 340 (LPPPGLSPPYLPVPSPHPPPPQPPPPPFS) has biased composition (pro residues). Low complexity predominate over residues 347–362 (SCMSSSSLSGSAVQSS). 4 stretches are compositionally biased toward polar residues: residues 363–374 (PNALLSSMAPSS), 441–452 (NLSSPGLPQQSF), 495–526 (HQAN…SSSP), and 547–564 (PSPQ…QSSL). The span at 571–588 (ATPAHAPSATASSTATAT) shows a compositional bias: low complexity. Positions 592–622 (QHHHQQHHHQQHHHQQQHHQQQHHQQHHHQQ) are enriched in basic residues. Residues 623–641 (QQHQQQQHQQQQQQQPDQS) are compositionally biased toward low complexity.

The protein belongs to the mastermind family.

It localises to the nucleus. Its function is as follows. Transactivates the HES3 promoter independently of NOTCH proteins. HES3 is a non-canonical NOTCH target gene which lacks binding sites for RBPJ. Required for testosterone production. The polypeptide is Mastermind-like domain-containing protein 1 (Mamld1) (Mus musculus (Mouse)).